Reading from the N-terminus, the 514-residue chain is Na(+)/H(+) antiporter NhaB (514 aa).

The next 12 helical transmembrane spans lie at 23–43 (LALLVFLIINPFIFLANPFIA), 63–83 (PLLPGGLLAIEAVIIGMTSAA), 97–117 (LLLMFMVAGIYFMKQLLLFIF), 120–140 (LLLSIRSKMVLSLAFCVAAAF), 144–164 (FLDALTVVAVVISVAVGFYGI), 202–222 (LMMHAGVGTALGGVMTMVGEP), 238–258 (FFLRMSPVTVPVLVCGLLTCM), 303–323 (AVIGVWLVTALALHLAEVGLI), 357–377 (LTVFFSIVAVIIDQHLFAPII), 391–411 (LFYLFNGLLSSISDNVFVGTI), 447–467 (ATPNGQAAFLFLLTSALAPLI), and 475–495 (VWMALPYTIVLTLIGLLCVEF).

This sequence belongs to the NhaB Na(+)/H(+) (TC 2.A.34) antiporter family.

The protein localises to the cell inner membrane. It carries out the reaction 2 Na(+)(in) + 3 H(+)(out) = 2 Na(+)(out) + 3 H(+)(in). In terms of biological role, na(+)/H(+) antiporter that extrudes sodium in exchange for external protons. This is Na(+)/H(+) antiporter NhaB from Salmonella newport (strain SL254).